The chain runs to 196 residues: Superantigen-like protein 11 (196 aa).

The interval 65–167 (LDVFVVREGS…RVTMKNGDFY (103 aa)) is sialyl Lewis X-binding.

It belongs to the staphylococcal/streptococcal toxin family. Homodimer (via its C-terminal domain). Interacts with host FCAR and SELPLG (via sialyl Lewis X).

It localises to the secreted. Its function is as follows. Secreted protein that plays a role in the inhibition of host immune system. Targets myeloid cells such as monocytes or granulocytes through binding with sialyllactosamine-containing glycoproteins. Prevents initial rolling of neutrophils toward the site of infection by interacting with host SELPLG. Disrupts neutrophil motility by induction of cell adhesion via interacting with glycans but independently of SELPLG. The sequence is that of Superantigen-like protein 11 from Staphylococcus aureus.